The following is a 271-amino-acid chain: Formamidopyrimidine-DNA glycosylase (271 aa).

The active-site Schiff-base intermediate with DNA is proline 2. Glutamate 3 acts as the Proton donor in catalysis. The active-site Proton donor; for beta-elimination activity is lysine 58. DNA contacts are provided by histidine 92, arginine 111, and lysine 152. The segment at 237 to 271 adopts an FPG-type zinc-finger fold; that stretch reads YVYGKVQKPCKICNNIITLIRQNGRSTYFCNACQN. The Proton donor; for delta-elimination activity role is filled by arginine 261.

It belongs to the FPG family. Monomer. Requires Zn(2+) as cofactor.

It catalyses the reaction Hydrolysis of DNA containing ring-opened 7-methylguanine residues, releasing 2,6-diamino-4-hydroxy-5-(N-methyl)formamidopyrimidine.. It carries out the reaction 2'-deoxyribonucleotide-(2'-deoxyribose 5'-phosphate)-2'-deoxyribonucleotide-DNA = a 3'-end 2'-deoxyribonucleotide-(2,3-dehydro-2,3-deoxyribose 5'-phosphate)-DNA + a 5'-end 5'-phospho-2'-deoxyribonucleoside-DNA + H(+). Its function is as follows. Involved in base excision repair of DNA damaged by oxidation or by mutagenic agents. Acts as a DNA glycosylase that recognizes and removes damaged bases. Has a preference for oxidized purines, such as 7,8-dihydro-8-oxoguanine (8-oxoG). Has AP (apurinic/apyrimidinic) lyase activity and introduces nicks in the DNA strand. Cleaves the DNA backbone by beta-delta elimination to generate a single-strand break at the site of the removed base with both 3'- and 5'-phosphates. This is Formamidopyrimidine-DNA glycosylase from Wolbachia sp. subsp. Drosophila simulans (strain wRi).